Reading from the N-terminus, the 451-residue chain is Signal recognition particle protein (451 aa).

GTP contacts are provided by residues 107 to 114, 190 to 194, and 248 to 251; these read GLQGSGKT, DTAGR, and TKTD.

This sequence belongs to the GTP-binding SRP family. SRP54 subfamily. In terms of assembly, part of the signal recognition particle protein translocation system, which is composed of SRP and FtsY. SRP is a ribonucleoprotein composed of Ffh and a 4.5S RNA molecule.

Its subcellular location is the cytoplasm. The catalysed reaction is GTP + H2O = GDP + phosphate + H(+). In terms of biological role, involved in targeting and insertion of nascent membrane proteins into the cytoplasmic membrane. Binds to the hydrophobic signal sequence of the ribosome-nascent chain (RNC) as it emerges from the ribosomes. The SRP-RNC complex is then targeted to the cytoplasmic membrane where it interacts with the SRP receptor FtsY. Interaction with FtsY leads to the transfer of the RNC complex to the Sec translocase for insertion into the membrane, the hydrolysis of GTP by both Ffh and FtsY, and the dissociation of the SRP-FtsY complex into the individual components. This is Signal recognition particle protein from Buchnera aphidicola subsp. Acyrthosiphon pisum (strain APS) (Acyrthosiphon pisum symbiotic bacterium).